Reading from the N-terminus, the 87-residue chain is Small ribosomal subunit protein uS17 (87 aa).

The protein belongs to the universal ribosomal protein uS17 family. In terms of assembly, part of the 30S ribosomal subunit.

Functionally, one of the primary rRNA binding proteins, it binds specifically to the 5'-end of 16S ribosomal RNA. This chain is Small ribosomal subunit protein uS17, found in Staphylococcus haemolyticus (strain JCSC1435).